Here is a 239-residue protein sequence, read N- to C-terminus: Tetraspanin-9 (239 aa).

Over Met1 to Met13 the chain is Cytoplasmic. The chain crosses the membrane as a helical span at residues Phe14 to Leu34. The Extracellular segment spans residues Ser35–Asn55. The chain crosses the membrane as a helical span at residues Leu56–Ile76. At Lys77–Ser85 the chain is on the cytoplasmic side. Residues Phe86–Val106 form a helical membrane-spanning segment. Topologically, residues Tyr107–His203 are extracellular. The N-linked (GlcNAc...) asparagine glycan is linked to Asn180. Residues Val204–Met224 form a helical membrane-spanning segment. Residues Thr225–Ala239 are Cytoplasmic-facing.

It belongs to the tetraspanin (TM4SF) family. Found in a complex with GP6. Post-translationally, glycosylated. In terms of tissue distribution, expressed in megakaryocytes and platelets (at protein level).

It is found in the membrane. This Homo sapiens (Human) protein is Tetraspanin-9 (TSPAN9).